The primary structure comprises 369 residues: UDP-3-O-acylglucosamine N-acyltransferase (369 aa).

Residue histidine 252 is the Proton acceptor of the active site. The tract at residues 348 to 369 is disordered; sequence ERRQRGENNAPAQNKQDEEKSS.

The protein belongs to the transferase hexapeptide repeat family. LpxD subfamily. As to quaternary structure, homotrimer.

It catalyses the reaction a UDP-3-O-[(3R)-3-hydroxyacyl]-alpha-D-glucosamine + a (3R)-hydroxyacyl-[ACP] = a UDP-2-N,3-O-bis[(3R)-3-hydroxyacyl]-alpha-D-glucosamine + holo-[ACP] + H(+). Its pathway is bacterial outer membrane biogenesis; LPS lipid A biosynthesis. Its function is as follows. Catalyzes the N-acylation of UDP-3-O-acylglucosamine using 3-hydroxyacyl-ACP as the acyl donor. Is involved in the biosynthesis of lipid A, a phosphorylated glycolipid that anchors the lipopolysaccharide to the outer membrane of the cell. The protein is UDP-3-O-acylglucosamine N-acyltransferase of Cupriavidus metallidurans (strain ATCC 43123 / DSM 2839 / NBRC 102507 / CH34) (Ralstonia metallidurans).